The following is a 362-amino-acid chain: MERIVVTLGERSYPITIASGLFNEPASFLPLKSGEQVMLVTNETLAPLYLDKVRGVLEQAGVNVDSVILPDGEQYKSLAVLDTVFTALLQKPHGRDTTLVALGGGVVGDLTGFAAASYQRGVRFIQVPTTLLSQVDSSVGGKTAVNHPLGKNMIGAFYQPASVVVDLDCLKTLPPRELASGLAEVIKYGIILDGAFFNWLEEHLDALLRLDGPAMAYCIRRCCELKAEVVAADERETGLRALLNLGHTFGHAIEAEMGYGNWLHGEAVAAGMVMAARTSERLGQFSSAETQRIITLLKRAGLPVNGPREMSAQAYLPHMLRDKKVLAGEMRLILPLAIGKSEVRSGVSHELVLNAIADCQSA.

Residues 71 to 76, 105 to 109, 129 to 130, Lys142, Lys151, and 169 to 172 each bind NAD(+); these read DGEQYK, GVVGD, TT, and CLKT. Glu184, His247, and His264 together coordinate Zn(2+).

Belongs to the sugar phosphate cyclases superfamily. Dehydroquinate synthase family. It depends on Co(2+) as a cofactor. Zn(2+) serves as cofactor. Requires NAD(+) as cofactor.

The protein resides in the cytoplasm. It carries out the reaction 7-phospho-2-dehydro-3-deoxy-D-arabino-heptonate = 3-dehydroquinate + phosphate. It functions in the pathway metabolic intermediate biosynthesis; chorismate biosynthesis; chorismate from D-erythrose 4-phosphate and phosphoenolpyruvate: step 2/7. Functionally, catalyzes the conversion of 3-deoxy-D-arabino-heptulosonate 7-phosphate (DAHP) to dehydroquinate (DHQ). The polypeptide is 3-dehydroquinate synthase (Shigella dysenteriae serotype 1 (strain Sd197)).